Here is a 367-residue protein sequence, read N- to C-terminus: tRNA-specific 2-thiouridylase MnmA (367 aa).

ATP-binding positions include 12–19 and methionine 38; that span reads GMSGGVDS. Residues 98–100 form an interaction with target base in tRNA region; the sequence is NPD. Cysteine 103 (nucleophile) is an active-site residue. A disulfide bond links cysteine 103 and cysteine 200. An ATP-binding site is contributed by glycine 128. The interval 150–152 is interaction with tRNA; sequence KDQ. Cysteine 200 acts as the Cysteine persulfide intermediate in catalysis. Positions 312–313 are interaction with tRNA; that stretch reads RY.

It belongs to the MnmA/TRMU family.

The protein localises to the cytoplasm. It catalyses the reaction S-sulfanyl-L-cysteinyl-[protein] + uridine(34) in tRNA + AH2 + ATP = 2-thiouridine(34) in tRNA + L-cysteinyl-[protein] + A + AMP + diphosphate + H(+). Functionally, catalyzes the 2-thiolation of uridine at the wobble position (U34) of tRNA, leading to the formation of s(2)U34. This chain is tRNA-specific 2-thiouridylase MnmA, found in Psychromonas ingrahamii (strain DSM 17664 / CCUG 51855 / 37).